Here is a 359-residue protein sequence, read N- to C-terminus: Protein FLX-like 2 (359 aa).

The segment covering 1–16 (MESKGRIHPSHHHMRR) has biased composition (basic residues). A disordered region spans residues 1-27 (MESKGRIHPSHHHMRRPLPGPGGCIAH). Residues 83 to 236 (HGSLRQELAA…EKLQAQLMNN (154 aa)) are a coiled coil. A disordered region spans residues 303-359 (TQPGYFPQRPGYNFPRGPPGSYDPTTRLPTGPYGAPFPPGPSNNTPYAGTHGNPSRR).

Belongs to the FLX family. Interacts with FRI.

Has no transcriptional activation activity. The chain is Protein FLX-like 2 (FLXL2) from Arabidopsis thaliana (Mouse-ear cress).